The sequence spans 195 residues: Peptidyl-tRNA hydrolase (195 aa).

Y17 serves as a coordination point for tRNA. The Proton acceptor role is filled by H22. TRNA is bound by residues F68, N70, and N116.

The protein belongs to the PTH family. Monomer.

The protein localises to the cytoplasm. The enzyme catalyses an N-acyl-L-alpha-aminoacyl-tRNA + H2O = an N-acyl-L-amino acid + a tRNA + H(+). Its function is as follows. Hydrolyzes ribosome-free peptidyl-tRNAs (with 1 or more amino acids incorporated), which drop off the ribosome during protein synthesis, or as a result of ribosome stalling. In terms of biological role, catalyzes the release of premature peptidyl moieties from peptidyl-tRNA molecules trapped in stalled 50S ribosomal subunits, and thus maintains levels of free tRNAs and 50S ribosomes. The sequence is that of Peptidyl-tRNA hydrolase from Shewanella loihica (strain ATCC BAA-1088 / PV-4).